The following is a 158-amino-acid chain: 2-C-methyl-D-erythritol 2,4-cyclodiphosphate synthase (158 aa).

A divalent metal cation contacts are provided by Asp8 and His10. 4-CDP-2-C-methyl-D-erythritol 2-phosphate is bound by residues 8–10 and 34–35; these read DVH and HS. His42 serves as a coordination point for a divalent metal cation. 4-CDP-2-C-methyl-D-erythritol 2-phosphate contacts are provided by residues 56-58, 132-135, and Arg142; these read DIG and TTNE.

The protein belongs to the IspF family. In terms of assembly, homotrimer. Requires a divalent metal cation as cofactor.

It catalyses the reaction 4-CDP-2-C-methyl-D-erythritol 2-phosphate = 2-C-methyl-D-erythritol 2,4-cyclic diphosphate + CMP. It participates in isoprenoid biosynthesis; isopentenyl diphosphate biosynthesis via DXP pathway; isopentenyl diphosphate from 1-deoxy-D-xylulose 5-phosphate: step 4/6. Functionally, involved in the biosynthesis of isopentenyl diphosphate (IPP) and dimethylallyl diphosphate (DMAPP), two major building blocks of isoprenoid compounds. Catalyzes the conversion of 4-diphosphocytidyl-2-C-methyl-D-erythritol 2-phosphate (CDP-ME2P) to 2-C-methyl-D-erythritol 2,4-cyclodiphosphate (ME-CPP) with a corresponding release of cytidine 5-monophosphate (CMP). The sequence is that of 2-C-methyl-D-erythritol 2,4-cyclodiphosphate synthase from Chlorobium phaeobacteroides (strain DSM 266 / SMG 266 / 2430).